We begin with the raw amino-acid sequence, 192 residues long: MSAKAQSLPIPPERVSEILDEWKRSPMRRPRIVKVTVNISIGQSGERLQRAAEVLEELTGQKPVFRKAKRTIRAFGVRKGENIAVMVTLRGEKALNFLKRALDAVGHRIKTSSIDEHGNVSFGIEEHILIPGVKYDPRVGILGMDVAITIQRPGHRIVERRRQRRGHIPRRHRVTREETMVLLNQLFGVTFV.

The protein belongs to the universal ribosomal protein uL5 family. Part of the 50S ribosomal subunit; contacts the 5S rRNA and probably tRNA. Forms a bridge to the 30S subunit in the 70S ribosome.

Its function is as follows. This is one of the proteins that bind and probably mediate the attachment of the 5S RNA into the large ribosomal subunit, where it forms part of the central protuberance. In the 70S ribosome it contacts protein S13 of the 30S subunit (bridge B1b), connecting the 2 subunits; this bridge is implicated in subunit movement. May contact the P site tRNA; the 5S rRNA and some of its associated proteins might help stabilize positioning of ribosome-bound tRNAs. The chain is Large ribosomal subunit protein uL5 from Aeropyrum pernix (strain ATCC 700893 / DSM 11879 / JCM 9820 / NBRC 100138 / K1).